The sequence spans 619 residues: CREB-regulated transcription coactivator 3 (619 aa).

Phosphoserine is present on residues serine 4 and serine 62. Residues 129–148 form a disordered region; sequence SQHLDESWPRQQPPWKEEKH. Phosphothreonine is present on threonine 160. Serine 162 carries the phosphoserine; by SIK2 modification. Lysine 232 participates in a covalent cross-link: Glycyl lysine isopeptide (Lys-Gly) (interchain with G-Cter in SUMO2). Phosphoserine occurs at positions 273, 329, 332, 370, 391, 396, and 410. The segment at 375-478 is disordered; sequence STTNLSGPSR…TQQPQAAPSL (104 aa). A required for interaction with PPP2CA and PPP2R1A region spans residues 380 to 401; the sequence is SGPSRRRQPPVSPLTLSPGPEA. Composition is skewed to polar residues over residues 405–415 and 422–431; these read FSRQLSATSPL and QMVTSEQSPL. At serine 443 the chain carries Phosphoserine. The segment covering 443 to 454 has biased composition (pro residues); that stretch reads SPPPPYPTPQEL. The span at 455-478 shows a compositional bias: low complexity; it reads PQPLLQQPHAQEPPTQQPQAAPSL.

This sequence belongs to the TORC family. As to quaternary structure, binding, as a tetramer, through its N-terminal region, with the bZIP domain of CREB1 enhances recruitment of TAF4 to the promoter. 'Arg-314' in the bZIP domain of CREB1 is essential for this interaction. Interacts (when phosphorylated at Ser-162 and Se-273) with 14-3-3 proteins. Interacts with YWHAE. Interacts (when phosphorylated at Ser-391) with phosphatase PP2A catalytic subunit PPP2CA and regulatory subunits PPP2R1A and PPP2R2A. In terms of processing, phosphorylation/dephosphorylation states of Ser-273 are required for regulating transduction of CREB activity. CRTCs/TORCs are inactive when phosphorylated, and active when dephosphorylated at this site. May be phosphorylated at Ser-391 by MAPK3/ERK1 and/or MAPK1/ERK2 or by some cyclin-dependent kinases such as CDK1,CDK2 or CDK5. Following adenylyl cyclase activation, dephosphorylated at Ser-162 and Ser-273 resulting in its dissociation from 14-3-3 proteins probably promoting CRTC3 translocation into the nucleus. As to expression, expressed in brown adipose tissues.

It is found in the nucleus. The protein resides in the cytoplasm. Functionally, transcriptional coactivator for CREB1 which activates transcription through both consensus and variant cAMP response element (CRE) sites. Acts as a coactivator, in the SIK/TORC signaling pathway, being active when dephosphorylated. Acts independently of CREB1 'Ser-133' phosphorylation. Enhances the interaction of CREB1 with TAF4. Regulates the expression of specific CREB-activated genes such as the steroidogenic gene, StAR. Potent coactivator of PPARGC1A and inducer of mitochondrial biogenesis in muscle cells. The protein is CREB-regulated transcription coactivator 3 (Crtc3) of Mus musculus (Mouse).